Here is a 119-residue protein sequence, read N- to C-terminus: NADH-quinone oxidoreductase subunit A (119 aa).

A run of 3 helical transmembrane segments spans residues 9 to 29, 63 to 83, and 88 to 108; these read VLLFILVGIGVGVVPLVLGYV, LVAILFILFDLEIAFLFPWAV, and VGMTGFVAVIVFLAILVVGFA.

Belongs to the complex I subunit 3 family. NDH-1 is composed of 14 different subunits. Subunits NuoA, H, J, K, L, M, N constitute the membrane sector of the complex.

It is found in the cell inner membrane. The enzyme catalyses a quinone + NADH + 5 H(+)(in) = a quinol + NAD(+) + 4 H(+)(out). NDH-1 shuttles electrons from NADH, via FMN and iron-sulfur (Fe-S) centers, to quinones in the respiratory chain. The immediate electron acceptor for the enzyme in this species is believed to be ubiquinone. Couples the redox reaction to proton translocation (for every two electrons transferred, four hydrogen ions are translocated across the cytoplasmic membrane), and thus conserves the redox energy in a proton gradient. This chain is NADH-quinone oxidoreductase subunit A, found in Paracidovorax citrulli (strain AAC00-1) (Acidovorax citrulli).